A 757-amino-acid polypeptide reads, in one-letter code: Serine/threonine-protein phosphatase 2A 56 kDa regulatory subunit delta isoform (757 aa).

Residues Met-1–Lys-11 show a composition bias toward basic residues. Disordered stretches follow at residues Met-1–Ala-172 and Ile-188–Thr-250. Positions Lys-12–Ser-21 are enriched in low complexity. Positions Lys-23–Ser-34 are enriched in basic and acidic residues. Low complexity-rich tracts occupy residues Ser-35–Ser-66, Ser-86–Lys-119, and Gln-128–Ser-147. The segment covering Thr-160 to Ala-172 has biased composition (basic and acidic residues). A compositionally biased stretch (low complexity) spans Ser-197 to Asn-216. Positions Thr-217–Ile-228 are enriched in polar residues. Thr-242 and Thr-257 each carry phosphothreonine. The interval Ser-734 to Gln-757 is disordered. Positions Glu-746–Gln-757 are enriched in acidic residues.

The protein belongs to the phosphatase 2A regulatory subunit B family. In terms of assembly, PP2A consists of a common heterodimeric core enzyme, composed of a 36 kDa catalytic subunit (subunit C) and a 65 kDa constant regulatory subunit (PR65 or subunit A), that associates with a variety of regulatory subunits. Proteins that associate with the core dimer include three families of regulatory subunits B (the R2/B/PR55/B55, R3/B''/PR72/PR130/PR59 and R5/B'/B56 families), the 48 kDa variable regulatory subunit, viral proteins, and cell signaling molecules.

It is found in the cytoplasm. The protein localises to the nucleus. Its function is as follows. The B regulatory subunit might modulate substrate selectivity and catalytic activity, and might also direct the localization of the catalytic enzyme to a particular subcellular compartment. Functionally, multicopy suppressor of ROX3 and HSP60. The sequence is that of Serine/threonine-protein phosphatase 2A 56 kDa regulatory subunit delta isoform (RTS1) from Saccharomyces cerevisiae (strain ATCC 204508 / S288c) (Baker's yeast).